The following is a 400-amino-acid chain: CCA-adding enzyme (400 aa).

The ATP site is built by glycine 28 and arginine 31. CTP is bound by residues glycine 28 and arginine 31. The Mg(2+) site is built by aspartate 41 and aspartate 43. 5 residues coordinate ATP: arginine 112, aspartate 155, arginine 158, arginine 161, and arginine 164. Residues arginine 112, aspartate 155, arginine 158, arginine 161, and arginine 164 each contribute to the CTP site.

This sequence belongs to the tRNA nucleotidyltransferase/poly(A) polymerase family. Bacterial CCA-adding enzyme type 3 subfamily. In terms of assembly, homodimer. Mg(2+) is required as a cofactor.

The enzyme catalyses a tRNA precursor + 2 CTP + ATP = a tRNA with a 3' CCA end + 3 diphosphate. It catalyses the reaction a tRNA with a 3' CCA end + 2 CTP + ATP = a tRNA with a 3' CCACCA end + 3 diphosphate. Catalyzes the addition and repair of the essential 3'-terminal CCA sequence in tRNAs without using a nucleic acid template. Adds these three nucleotides in the order of C, C, and A to the tRNA nucleotide-73, using CTP and ATP as substrates and producing inorganic pyrophosphate. tRNA 3'-terminal CCA addition is required both for tRNA processing and repair. Also involved in tRNA surveillance by mediating tandem CCA addition to generate a CCACCA at the 3' terminus of unstable tRNAs. While stable tRNAs receive only 3'-terminal CCA, unstable tRNAs are marked with CCACCA and rapidly degraded. The chain is CCA-adding enzyme from Staphylococcus aureus (strain bovine RF122 / ET3-1).